The following is a 378-amino-acid chain: Cyclic GMP-AMP synthase-like receptor 1 (378 aa).

Glutamate 71, aspartate 73, and aspartate 187 together coordinate Mg(2+). 71-73 (EFD) provides a ligand contact to ATP. GTP is bound by residues aspartate 187 and 233–240 (TSSFYEAE). ATP-binding positions include 237–240 (YEAE), lysine 258, and 271–275 (SYHIK).

The protein belongs to the mab-21 family. The cofactor is Mg(2+). Mn(2+) serves as cofactor.

The enzyme catalyses GTP + ATP = 3',2'-cGAMP + 2 diphosphate. The catalysed reaction is GTP + ATP = pppA(2'-5')pG + diphosphate. It catalyses the reaction pppA(2'-5')pG = 3',2'-cGAMP + diphosphate. Its activity is regulated as follows. The enzyme activity is specifically activated by double-stranded RNA (dsRNA). Recognizes long dsRNA (&gt;30 bp) with no preference for 5' RNA phosphorylation. Functionally, nucleotidyltransferase that catalyzes the formation of cyclic GMP-AMP (3',2'-cGAMP) from ATP and GTP and plays a key role in antiviral innate immunity. Synthesizes 3',2'-cGAMP in a two-step reaction through production of the linear intermediate pppA(2'-5')pG. Acts as a key sensor of double-stranded RNA (dsRNA), the presence of dsRNA in the cytoplasm being a danger signal that triggers the immune responses. Directly binds dsRNA, activating the nucleotidyltransferase activity, leading to synthesis of 3',2'-cGAMP, a second messenger that binds to and activates Sting, thereby triggering the antiviral immune response via activation of the NF-kappa-B transcription factor Rel (Relish). 3',2'-cGAMP is protected from poxin cleavage. The sequence is that of Cyclic GMP-AMP synthase-like receptor 1 from Drosophila melanogaster (Fruit fly).